A 279-amino-acid chain; its full sequence is L-ascorbate peroxidase 5, peroxisomal (279 aa).

Histidine 39 serves as the catalytic Proton acceptor. The interval 111–134 is disordered; that stretch reads PFTPGRKDADSADDGELPNPNEGA. Position 158 (histidine 158) interacts with heme b. Threonine 159, threonine 175, and aspartate 182 together coordinate K(+). Residues 251–271 traverse the membrane as a helical segment; sequence AVTQQTLGIAVAAAVVIFTIC. The short motif at 272-279 is the AKR2A-binding sequence (ABS) required for peroxisome membrane targeting element; sequence YEASRRGK.

Belongs to the peroxidase family. Ascorbate peroxidase subfamily. Interacts with AKR2A and AKR2B. The cofactor is heme b.

Its subcellular location is the peroxisome membrane. The enzyme catalyses L-ascorbate + H2O2 = L-dehydroascorbate + 2 H2O. In terms of biological role, plays a key role in hydrogen peroxide removal. This is L-ascorbate peroxidase 5, peroxisomal (APX5) from Arabidopsis thaliana (Mouse-ear cress).